Reading from the N-terminus, the 293-residue chain is uncharacterized protein (293 aa).

Positions 1-10 (MHMQLRKRKR) are enriched in basic residues. The segment at 1–28 (MHMQLRKRKRVDYSGRNQTSDPPSTTTA) is disordered. Residues 15–28 (GRNQTSDPPSTTTA) show a composition bias toward polar residues.

The protein localises to the nucleus. This is an uncharacterized protein from Saccharomyces cerevisiae (strain ATCC 204508 / S288c) (Baker's yeast).